The primary structure comprises 208 residues: Segregation and condensation protein B (208 aa).

The protein belongs to the ScpB family. As to quaternary structure, homodimer. Homodimerization may be required to stabilize the binding of ScpA to the Smc head domains. Component of a cohesin-like complex composed of ScpA, ScpB and the Smc homodimer, in which ScpA and ScpB bind to the head domain of Smc. The presence of the three proteins is required for the association of the complex with DNA.

It localises to the cytoplasm. Its function is as follows. Participates in chromosomal partition during cell division. May act via the formation of a condensin-like complex containing Smc and ScpA that pull DNA away from mid-cell into both cell halves. This chain is Segregation and condensation protein B, found in Mycoplasma pneumoniae (strain ATCC 29342 / M129 / Subtype 1) (Mycoplasmoides pneumoniae).